The sequence spans 527 residues: Proline--tRNA ligase (527 aa).

It belongs to the class-II aminoacyl-tRNA synthetase family. ProS type 3 subfamily. As to quaternary structure, homodimer.

It is found in the cytoplasm. It carries out the reaction tRNA(Pro) + L-proline + ATP = L-prolyl-tRNA(Pro) + AMP + diphosphate. Its function is as follows. Catalyzes the attachment of proline to tRNA(Pro) in a two-step reaction: proline is first activated by ATP to form Pro-AMP and then transferred to the acceptor end of tRNA(Pro). This Sphingopyxis alaskensis (strain DSM 13593 / LMG 18877 / RB2256) (Sphingomonas alaskensis) protein is Proline--tRNA ligase.